The sequence spans 269 residues: NAD-capped RNA hydrolase NudC (269 aa).

R74 provides a ligand contact to substrate. Zn(2+) contacts are provided by C103, C106, C121, and C124. Y129 contacts substrate. A Nudix hydrolase domain is found at 130 to 253; it reads PRIFPCIIVA…TIARQLIENT (124 aa). Residues A163, E179, and E183 each coordinate a divalent metal cation. The Nudix box motif lies at 164 to 185; that stretch reads GFLEVGETLEQCVAREVKEETG. A substrate-binding site is contributed by 197-204; it reads QPWAFPSS. A divalent metal cation is bound at residue E224. A246 contacts substrate.

The protein belongs to the Nudix hydrolase family. NudC subfamily. Homodimer. Mg(2+) serves as cofactor. Requires Mn(2+) as cofactor. It depends on Zn(2+) as a cofactor.

It carries out the reaction a 5'-end NAD(+)-phospho-ribonucleoside in mRNA + H2O = a 5'-end phospho-adenosine-phospho-ribonucleoside in mRNA + beta-nicotinamide D-ribonucleotide + 2 H(+). It catalyses the reaction NAD(+) + H2O = beta-nicotinamide D-ribonucleotide + AMP + 2 H(+). The catalysed reaction is NADH + H2O = reduced beta-nicotinamide D-ribonucleotide + AMP + 2 H(+). Its function is as follows. mRNA decapping enzyme that specifically removes the nicotinamide adenine dinucleotide (NAD) cap from a subset of mRNAs by hydrolyzing the diphosphate linkage to produce nicotinamide mononucleotide (NMN) and 5' monophosphate mRNA. The NAD-cap is present at the 5'-end of some mRNAs and stabilizes RNA against 5'-processing. Has preference for mRNAs with a 5'-end purine. Catalyzes the hydrolysis of a broad range of dinucleotide pyrophosphates. This is NAD-capped RNA hydrolase NudC from Vibrio atlanticus (strain LGP32) (Vibrio splendidus (strain Mel32)).